We begin with the raw amino-acid sequence, 330 residues long: Inactive hydroxysteroid dehydrogenase-like protein 1 (330 aa).

Position 2 is an N-acetylalanine (A2). Positions 2-82 (AAVDSFYLLY…SGATDGIGKA (81 aa)) are required for mitochondria translocation. NADP(+)-binding positions include 74 to 80 (GATDGIG), D125, and K222.

This sequence belongs to the short-chain dehydrogenases/reductases (SDR) family. 17-beta-HSD 3 subfamily. Interacts with STYXL1. Highly expressed in testis and ovary. Also detected in thyroid, spinal cord, adrenal gland, heart, placenta, skeletal muscle, small intestine, colon, spleen, prostate and pancreas.

It localises to the mitochondrion. The polypeptide is Inactive hydroxysteroid dehydrogenase-like protein 1 (HSDL1) (Homo sapiens (Human)).